A 190-amino-acid chain; its full sequence is Lipid A acyltransferase PagP (190 aa).

The first 24 residues, 1–24, serve as a signal peptide directing secretion; the sequence is MNRYLLTTLSAPLLALFFSFSLQA. Residues histidine 62, aspartate 105, and serine 106 contribute to the active site.

This sequence belongs to the lipid A palmitoyltransferase family. As to quaternary structure, homodimer.

The protein resides in the cell outer membrane. The catalysed reaction is a lipid A + a 1,2-diacyl-sn-glycero-3-phosphocholine = a hepta-acyl lipid A + a 2-acyl-sn-glycero-3-phosphocholine. It catalyses the reaction a lipid IVA + a 1,2-diacyl-sn-glycero-3-phosphocholine = a lipid IVB + a 2-acyl-sn-glycero-3-phosphocholine. It carries out the reaction a lipid IIA + a 1,2-diacyl-sn-glycero-3-phosphocholine = a lipid IIB + a 2-acyl-sn-glycero-3-phosphocholine. Its function is as follows. Transfers a fatty acid residue from the sn-1 position of a phospholipid to the N-linked hydroxyfatty acid chain on the proximal unit of lipid A or its precursors. The protein is Lipid A acyltransferase PagP of Pantoea ananatis (strain LMG 20103).